Reading from the N-terminus, the 159-residue chain is 6,7-dimethyl-8-ribityllumazine synthase (159 aa).

5-amino-6-(D-ribitylamino)uracil contacts are provided by residues Trp-26, 57-59 (ALE), and 79-81 (CVV). A (2S)-2-hydroxy-3-oxobutyl phosphate-binding site is contributed by 84–85 (GT). Catalysis depends on His-87, which acts as the Proton donor. Asn-112 lines the 5-amino-6-(D-ribitylamino)uracil pocket. Arg-126 contacts (2S)-2-hydroxy-3-oxobutyl phosphate.

Belongs to the DMRL synthase family.

The catalysed reaction is (2S)-2-hydroxy-3-oxobutyl phosphate + 5-amino-6-(D-ribitylamino)uracil = 6,7-dimethyl-8-(1-D-ribityl)lumazine + phosphate + 2 H2O + H(+). Its pathway is cofactor biosynthesis; riboflavin biosynthesis; riboflavin from 2-hydroxy-3-oxobutyl phosphate and 5-amino-6-(D-ribitylamino)uracil: step 1/2. Functionally, catalyzes the formation of 6,7-dimethyl-8-ribityllumazine by condensation of 5-amino-6-(D-ribitylamino)uracil with 3,4-dihydroxy-2-butanone 4-phosphate. This is the penultimate step in the biosynthesis of riboflavin. The protein is 6,7-dimethyl-8-ribityllumazine synthase of Corynebacterium glutamicum (strain ATCC 13032 / DSM 20300 / JCM 1318 / BCRC 11384 / CCUG 27702 / LMG 3730 / NBRC 12168 / NCIMB 10025 / NRRL B-2784 / 534).